A 180-amino-acid chain; its full sequence is ATP-dependent protease subunit HslV (180 aa).

Thr9 is an active-site residue. The Na(+) site is built by Ala164, Cys167, and Thr170.

The protein belongs to the peptidase T1B family. HslV subfamily. A double ring-shaped homohexamer of HslV is capped on each side by a ring-shaped HslU homohexamer. The assembly of the HslU/HslV complex is dependent on binding of ATP.

Its subcellular location is the cytoplasm. The catalysed reaction is ATP-dependent cleavage of peptide bonds with broad specificity.. With respect to regulation, allosterically activated by HslU binding. Its function is as follows. Protease subunit of a proteasome-like degradation complex believed to be a general protein degrading machinery. In Leptospira interrogans serogroup Icterohaemorrhagiae serovar Lai (strain 56601), this protein is ATP-dependent protease subunit HslV.